The chain runs to 263 residues: Elongation factor Ts (263 aa).

Residues 82-85 form an involved in Mg(2+) ion dislocation from EF-Tu region; sequence TDFV. Positions 221 to 251 are enriched in low complexity; it reads APPAVVEAPVAETPEPAVAETPEAKPAATES. The tract at residues 221-263 is disordered; it reads APPAVVEAPVAETPEPAVAETPEAKPAATESKPAKSKSAKKKK. Residues 254–263 are compositionally biased toward basic residues; it reads AKSKSAKKKK.

Belongs to the EF-Ts family.

It localises to the cytoplasm. In terms of biological role, associates with the EF-Tu.GDP complex and induces the exchange of GDP to GTP. It remains bound to the aminoacyl-tRNA.EF-Tu.GTP complex up to the GTP hydrolysis stage on the ribosome. The protein is Elongation factor Ts of Cyanothece sp. (strain PCC 7425 / ATCC 29141).